We begin with the raw amino-acid sequence, 384 residues long: Helix-loop-helix protein delilah (384 aa).

2 disordered regions span residues 1 to 101 (MKSN…TANA) and 187 to 227 (EEAE…KIVP). Positions 75–86 (KSRKNAPTKSKT) are enriched in basic residues. Positions 94–153 (YRRKTANARERTRMREINTAFETLRHCVPEAIKGEDAANTNEKLTKITTLRLAMKYITML) constitute a bHLH domain. A compositionally biased stretch (low complexity) spans 209-224 (KKSSAASKRQSQKQAK).

As to quaternary structure, efficient DNA binding requires dimerization with another bHLH protein, possibly with da. In terms of tissue distribution, expressed almost exclusively in the attachments sites of the somatic muscles to tendon cells in the epidermis.

The protein localises to the nucleus. Functionally, probably plays an important role in the differentiation of epidermal cells into the tendon cells that form the attachment sites for all muscles. This chain is Helix-loop-helix protein delilah (tx), found in Drosophila melanogaster (Fruit fly).